A 372-amino-acid polypeptide reads, in one-letter code: Riboflavin biosynthesis protein RibD (372 aa).

The CMP/dCMP-type deaminase domain maps to 1 to 122 (MKDIFYMKKA…KWLKKHGILV (122 aa)). Residues 1-145 (MKDIFYMKKA…KGFFQRMTTG (145 aa)) form a deaminase region. H50 lines the Zn(2+) pocket. Residue E52 is the Proton donor of the active site. 2 residues coordinate Zn(2+): C75 and C84. Positions 146-372 (IPWIKLKLAS…KLILTKHNSS (227 aa)) are reductase. NADP(+) is bound at residue A154. Residue S168 participates in substrate binding. W170 is a binding site for NADP(+). Substrate is bound at residue R184. NADP(+) contacts are provided by T196 and D200. Residues L204 and R207 each contribute to the substrate site. Residue S236 coordinates NADP(+). E301 is a binding site for substrate. 303-309 (GPSLSSS) is a binding site for NADP(+).

The protein in the N-terminal section; belongs to the cytidine and deoxycytidylate deaminase family. This sequence in the C-terminal section; belongs to the HTP reductase family. Zn(2+) is required as a cofactor.

The catalysed reaction is 2,5-diamino-6-hydroxy-4-(5-phosphoribosylamino)-pyrimidine + H2O + H(+) = 5-amino-6-(5-phospho-D-ribosylamino)uracil + NH4(+). It catalyses the reaction 5-amino-6-(5-phospho-D-ribitylamino)uracil + NADP(+) = 5-amino-6-(5-phospho-D-ribosylamino)uracil + NADPH + H(+). The protein operates within cofactor biosynthesis; riboflavin biosynthesis; 5-amino-6-(D-ribitylamino)uracil from GTP: step 2/4. It participates in cofactor biosynthesis; riboflavin biosynthesis; 5-amino-6-(D-ribitylamino)uracil from GTP: step 3/4. Converts 2,5-diamino-6-(ribosylamino)-4(3h)-pyrimidinone 5'-phosphate into 5-amino-6-(ribosylamino)-2,4(1h,3h)-pyrimidinedione 5'-phosphate. The sequence is that of Riboflavin biosynthesis protein RibD (ribD) from Buchnera aphidicola subsp. Baizongia pistaciae (strain Bp).